A 35-amino-acid chain; its full sequence is SKKIGLFYGTZTGKTESVAEIIDEFGDEVVTLDID.

The 32-residue stretch at Ile-4–Asp-35 folds into the Flavodoxin-like domain.

It belongs to the flavodoxin family. The cofactor is FMN.

In terms of biological role, low-potential electron donor to a number of redox enzymes. The chain is Flavodoxin from Nostoc sp. (strain MAC).